We begin with the raw amino-acid sequence, 427 residues long: ATP-dependent RNA helicase DDX39A (427 aa).

Over residues 1–19 (MAEQDVENELLDYDEDEEP) the composition is skewed to acidic residues. Residues 1–36 (MAEQDVENELLDYDEDEEPQAPQESTPAPPKKDVKG) form a disordered region. At Ala2 the chain carries N-acetylalanine. A Glycyl lysine isopeptide (Lys-Gly) (interchain with G-Cter in SUMO2) cross-link involves residue Lys31. Lys35 carries the post-translational modification N6-acetyllysine; alternate. Lys35 is covalently cross-linked (Glycyl lysine isopeptide (Lys-Gly) (interchain with G-Cter in SUMO2); alternate). The residue at position 37 (Ser37) is a Phosphoserine. The short motif at 44–72 (SGFRDFLLKPELLRAIVDCGFEHPSEVQH) is the Q motif element. One can recognise a Helicase ATP-binding domain in the interval 75–248 (IPQAILGMDV…RKFMQDPMEV (174 aa)). 88 to 95 (AKSGMGKT) contacts ATP. Glycyl lysine isopeptide (Lys-Gly) (interchain with G-Cter in SUMO2) cross-links involve residues Lys154 and Lys162. Thr171 is subject to Phosphothreonine. Positions 195–198 (DECD) match the DECD box motif. Glycyl lysine isopeptide (Lys-Gly) (interchain with G-Cter in SUMO2) cross-links involve residues Lys240 and Lys255. The Helicase C-terminal domain maps to 260–421 (GLQQYYVKLK…ELPEEIDIST (162 aa)). Ser426 carries the post-translational modification Phosphoserine.

Belongs to the DEAD box helicase family. DECD subfamily. As to quaternary structure, binds ALYREF/THOC4 and DDX39B/BAT1. Interacts with the apo-AREX complex component SARNP. Interacts with MX1. Interacts with MCM3AP isoform GANP. Interacts with ECD. Interacts with PHAX; this interaction stimulates PHAX RNA binding activity. Post-translationally, SUMOylated by RANBP2; SUMOylation modification affects its ability to bind RNA.

The protein resides in the nucleus. It is found in the cytoplasm. It catalyses the reaction ATP + H2O = ADP + phosphate + H(+). In terms of biological role, helicase that plays an essential role in mRNA export and is involved in multiple steps in RNA metabolism including alternative splicing. Regulates nuclear mRNA export to the cytoplasm through association with ECD. Also involved in spliceosomal uridine-rich small nuclear RNA (U snRNA) export by stimulating the RNA binding of adapter PHAX. Plays a role in the negative regulation of type I IFN production by increasing the nuclear retention of antiviral transcripts and thus reducing their protein expression. Independently of the interferon pathway, plays an antiviral role against alphaviruses by binding to a 5' conserved sequence element in the viral genomic RNA. This Mus musculus (Mouse) protein is ATP-dependent RNA helicase DDX39A.